A 349-amino-acid polypeptide reads, in one-letter code: Protein-glutamate methylesterase/protein-glutamine glutaminase (349 aa).

Residues 5–122 (RVLSVDDSAL…REGMLAYNEM (118 aa)) enclose the Response regulatory domain. Asp56 carries the 4-aspartylphosphate modification. A CheB-type methylesterase domain is found at 152–344 (LLSSEKLIAI…QQMLAKISAG (193 aa)). Active-site residues include Ser164, His190, and Asp286.

This sequence belongs to the CheB family. As to quaternary structure, interacts with CheA. Binds to a C-terminal pentapeptide sequence carried by certain receptors. Post-translationally, phosphorylated by CheA. Phosphorylation of the N-terminal regulatory domain activates the methylesterase activity.

It localises to the cytoplasm. The catalysed reaction is [protein]-L-glutamate 5-O-methyl ester + H2O = L-glutamyl-[protein] + methanol + H(+). It catalyses the reaction L-glutaminyl-[protein] + H2O = L-glutamyl-[protein] + NH4(+). Methylesterase activity is activated via phosphorylation in response to negative chemotactic stimuli and is inhibited in the presence of attractants. Activation requires both CheA and CheW. In terms of biological role, involved in chemotaxis. Part of a chemotaxis signal transduction system that modulates chemotaxis in response to various stimuli. Catalyzes the demethylation of specific methylglutamate residues introduced into the chemoreceptors (methyl-accepting chemotaxis proteins or MCP) by CheR. Also mediates the irreversible deamidation of specific glutamine residues to glutamic acid. Catalyzes its own deactivation by removing the activating phosphoryl group. In Escherichia coli (strain K12), this protein is Protein-glutamate methylesterase/protein-glutamine glutaminase.